A 235-amino-acid chain; its full sequence is UPF0173 metal-dependent hydrolase mll0680 (235 aa).

This sequence belongs to the UPF0173 family.

This chain is UPF0173 metal-dependent hydrolase mll0680, found in Mesorhizobium japonicum (strain LMG 29417 / CECT 9101 / MAFF 303099) (Mesorhizobium loti (strain MAFF 303099)).